The following is a 334-amino-acid chain: Nucleoid-associated protein VS_0951 (334 aa).

Belongs to the YejK family.

It localises to the cytoplasm. It is found in the nucleoid. The chain is Nucleoid-associated protein VS_0951 from Vibrio atlanticus (strain LGP32) (Vibrio splendidus (strain Mel32)).